Reading from the N-terminus, the 272-residue chain is HMP-PP phosphatase (272 aa).

The active-site Nucleophile is aspartate 8. Positions 8, 10, and 212 each coordinate Mg(2+).

Belongs to the HAD-like hydrolase superfamily. Cof family. Mg(2+) is required as a cofactor.

The enzyme catalyses 4-amino-2-methyl-5-(diphosphooxymethyl)pyrimidine + H2O = 4-amino-2-methyl-5-(phosphooxymethyl)pyrimidine + phosphate + H(+). In terms of biological role, catalyzes the hydrolysis of 4-amino-2-methyl-5-hydroxymethylpyrimidine pyrophosphate (HMP-PP) to 4-amino-2-methyl-5-hydroxymethylpyrimidine phosphate (HMP-P). The sequence is that of HMP-PP phosphatase from Salmonella agona (strain SL483).